Here is a 551-residue protein sequence, read N- to C-terminus: Cleavage and polyadenylation specificity factor subunit 6 (551 aa).

The segment at 1-213 is necessary for interaction with NXF1; the sequence is MADGVDHIDI…RGRFPGAVPG (213 aa). The 81-residue stretch at 81-161 folds into the RRM domain; sequence IALYIGNLTW…QNPVVTPCNK (81 aa). The necessary for interaction with NUDT21/CPSF5 stretch occupies residues 81–161; that stretch reads IALYIGNLTW…QNPVVTPCNK (81 aa). Residues 81-161 form a necessary for nuclear paraspeckles localization region; sequence IALYIGNLTW…QNPVVTPCNK (81 aa). Phosphothreonine is present on threonine 157. Over residues 169–180 the composition is skewed to polar residues; that stretch reads MQSRKTTQSGQM. Disordered stretches follow at residues 169 to 411 and 477 to 551; these read MQSR…PLSE and LHGI…YRHR. The short motif at 202-206 is the GAR element; that stretch reads RGRGR. The span at 207 to 219 shows a compositional bias: low complexity; that stretch reads FPGAVPGGDRFPG. Composition is skewed to pro residues over residues 220–265, 285–366, and 377–388; these read PAGP…PLAG, GQPP…PPPT, and GPPPTDPYGRPP. Residues 358 to 551 are (Microbial infection) Binds to HIV-1 capsid protein p24 (CA); the sequence is NPAFFPPPTN…RDREREYRHR (194 aa). Residues 389-404 are compositionally biased toward basic and acidic residues; sequence PYDRGDYGPPGREMDT. 2 positions are modified to phosphothreonine: threonine 404 and threonine 407. Residues 404–551 are sufficient for nuclear speckle localization; sequence TARTPLSEAE…RDREREYRHR (148 aa). The tract at residues 405–551 is necessary for RNA-binding; sequence ARTPLSEAEF…RDREREYRHR (147 aa). The segment at 481-551 is necessary for interaction with SRSF3, SRSF7 and TRA2B/SFRS10; it reads ESKSYGSGSR…RDREREYRHR (71 aa). Basic and acidic residues predominate over residues 489–503; it reads SRRERSRERDHSRSR. Residues 490 to 551 are arg/Ser-rich domain; the sequence is RRERSRERDH…RDREREYRHR (62 aa). Serine 494, serine 500, serine 511, serine 513, and serine 525 each carry phosphoserine. Residues 504–514 show a composition bias toward basic residues; that stretch reads EKSRRHKSRSR. The sufficient for nuclear targeting stretch occupies residues 510–551; the sequence is KSRSRDRHDDYYRERSRERERHRDRDRDRDRERDREREYRHR. Over residues 515–551 the composition is skewed to basic and acidic residues; it reads DRHDDYYRERSRERERHRDRDRDRDRERDREREYRHR.

Belongs to the RRM CPSF6/7 family. Component of the cleavage factor Im (CFIm) complex which is a heterotetramer composed of two subunits of NUDT21/CPSF5 and two subunits of CPSF6 or CPSF7 or a heterodimer of CPSF6 and CPSF7. The cleavage factor Im (CFIm) complex associates with the CPSF and CSTF complexes to promote the assembly of the core mRNA 3'-processing machinery. Associates with the exon junction complex (EJC). Associates with the 80S ribosome particle. Interacts (via the RRM domain) with NUDT21/CPSF5; this interaction is direct and enhances binding to RNA. Interacts (via Arg/Ser-rich domain) with FIP1L1 (preferentially via unphosphorylated form and Arg/Glu/Asp-rich domain); this interaction mediates, at least in part, the interaction between the CFIm and CPSF complexes and may be inhibited by CPSF6 hyper-phosphorylation. Interacts (via N-terminus) with NXF1; this interaction is direct. Interacts with SRSF3. Interacts with SRSF7. Interacts with SNRNP70. Interacts with TRA2B/SFRS10. Interacts with UPF1. Interacts with UPF3B. Interacts with VIRMA. Interacts (via Arg/Ser-rich domain) with TNPO3; promoting nuclear import of CPSF6 independently of its phosphorylation status. Interacts with YTHDC1. In terms of assembly, (Microbial infection) Interacts (via C-terminus) with HIV-1 capsid protein p24 (CA). Post-translationally, phosphorylated. Phosphorylated in the Arg/Ser-rich domain by SRPK1, in vitro. Symmetrically dimethylated on arginine residues in the GAR motif by PRMT5 in a WDR77- and CLNS1A-dependent manner. Asymmetrically dimethylated on arginine residues in the GAR motif by PRMT1.

The protein resides in the nucleus. The protein localises to the nucleoplasm. Its subcellular location is the nucleus speckle. It localises to the cytoplasm. Its function is as follows. Component of the cleavage factor Im (CFIm) complex that functions as an activator of the pre-mRNA 3'-end cleavage and polyadenylation processing required for the maturation of pre-mRNA into functional mRNAs. CFIm contributes to the recruitment of multiprotein complexes on specific sequences on the pre-mRNA 3'-end, so called cleavage and polyadenylation signals (pA signals). Most pre-mRNAs contain multiple pA signals, resulting in alternative cleavage and polyadenylation (APA) producing mRNAs with variable 3'-end formation. The CFIm complex acts as a key regulator of cleavage and polyadenylation site choice during APA through its binding to 5'-UGUA-3' elements localized in the 3'-untranslated region (UTR) for a huge number of pre-mRNAs. CPSF6 enhances NUDT21/CPSF5 binding to 5'-UGUA-3' elements localized upstream of pA signals and promotes RNA looping, and hence activates directly the mRNA 3'-processing machinery. Plays a role in mRNA export. Functionally, (Microbial infection) Binds HIV-1 capsid-nucleocapsid (HIV-1 CA-NC) complexes and might thereby promote the integration of the virus in the nucleus of dividing cells (in vitro). The sequence is that of Cleavage and polyadenylation specificity factor subunit 6 from Homo sapiens (Human).